The chain runs to 254 residues: Pyrroloquinoline-quinone synthase (254 aa).

This sequence belongs to the PqqC family.

It catalyses the reaction 6-(2-amino-2-carboxyethyl)-7,8-dioxo-1,2,3,4,7,8-hexahydroquinoline-2,4-dicarboxylate + 3 O2 = pyrroloquinoline quinone + 2 H2O2 + 2 H2O + H(+). It functions in the pathway cofactor biosynthesis; pyrroloquinoline quinone biosynthesis. Functionally, ring cyclization and eight-electron oxidation of 3a-(2-amino-2-carboxyethyl)-4,5-dioxo-4,5,6,7,8,9-hexahydroquinoline-7,9-dicarboxylic-acid to PQQ. This Rhodopseudomonas palustris (strain ATCC BAA-98 / CGA009) protein is Pyrroloquinoline-quinone synthase.